An 86-amino-acid chain; its full sequence is uncharacterized protein (86 aa).

This is an uncharacterized protein from African swine fever virus (strain Badajoz 1971 Vero-adapted) (Ba71V).